Here is a 918-residue protein sequence, read N- to C-terminus: Sarcosine dehydrogenase, mitochondrial (918 aa).

Residues 1-13 show a composition bias toward low complexity; the sequence is MASLSRALRVAAA. The transit peptide at 1-22 directs the protein to the mitochondrion; it reads MASLSRALRVAAAHPRQSPTRG. The interval 1–40 is disordered; that stretch reads MASLSRALRVAAAHPRQSPTRGMGPCNLSSAAGPTAEKSV. At Lys38 the chain carries N6-succinyllysine. The residue at position 108 (His108) is a Tele-8alpha-FAD histidine. Lys173 is modified (N6-acetyllysine; alternate). An N6-succinyllysine; alternate modification is found at Lys173. 2 positions are modified to N6-succinyllysine: Lys377 and Lys391. An N6-acetyllysine mark is found at Lys559 and Lys775. Tyr777 is subject to Phosphotyrosine. N6-acetyllysine; alternate occurs at positions 802, 884, and 904. N6-succinyllysine; alternate is present on residues Lys802, Lys884, and Lys904.

It belongs to the GcvT family. The cofactor is FAD. Expressed in pancreas, liver and kidney.

The protein localises to the mitochondrion matrix. The enzyme catalyses (6S)-5,6,7,8-tetrahydrofolyl-(gamma-L-Glu)(n) + sarcosine + oxidized [electron-transfer flavoprotein] + H(+) = (6R)-5,10-methylenetetrahydrofolyl-(gamma-L-Glu)(n) + reduced [electron-transfer flavoprotein] + glycine. Its pathway is amine and polyamine degradation; sarcosine degradation; formaldehyde and glycine from sarcosine: step 1/1. Catalyzes the last step of the oxidative degradation of choline to glycine. Converts sarcosine into glycine. The protein is Sarcosine dehydrogenase, mitochondrial of Homo sapiens (Human).